Reading from the N-terminus, the 446-residue chain is MPLTGLEIYKQLPKKNCGECGTPTCLAFAMNLASGKASLDSCPYVSDAAREALDAAAAPPIAKVVLGAGPTAVEMGDETELFRHDKRFYHETAIAIQVSDNLSSEELKAKVEAINGLNFDRVGQHYTIQAIAIRHDADDPAAFKAAVASVAAATQLNLVLMADDPDVLKEALAGVADRKPLLYAATGANYEAMTALAKENNCPLAVYGNGLEELAELVDKIVALGHKQLVLDPGARETSRAIADFTQIRRLAIKKRFRSFGYPIIALTTAANPLDEVLQAVNYVTKYASLVVLRTDAKEHLLPLLSWRQNLYTDPQVPIRVEEKLNEIGAVNENSPVYVTTNFSLTYYSVEGEIESTKIPSYLLSVDTDGLSVLTAYADGKFEAEKIAAVMKKVDLDNKVKRHRIIIPGAVAVLKGKLEDLTGWEVIVGPREASGIVAFARANLAS.

The 58-residue stretch at Pro2–Pro59 folds into the 4Fe-4S domain. [4Fe-4S] cluster is bound by residues Cys17, Cys20, Cys25, and Cys42. Residues Thr340, Thr346, Gly370–Val373, and Ala433 contribute to the 5-methoxybenzimidazolylcob(I)amide site.

Heterohexamer composed of 2 subunits of AcsC, 2 subunits of AcsD and 2 subunits of AcsE. Requires [4Fe-4S] cluster as cofactor.

Functionally, acts as a methyl group carrier in the anaerobic acetyl-CoA pathway (Wood-Ljungdahl pathway) of carbon monoxide and carbon dioxide fixation. Binds the corrinoid 5-methoxybenzimidazolylcobamide which is then methylated by the AcsE subunit. In Moorella thermoacetica (Clostridium thermoaceticum), this protein is Corrinoid/iron-sulfur protein large subunit (acsC).